A 363-amino-acid chain; its full sequence is Ribosomal RNA large subunit methyltransferase M (363 aa).

Residues S194, 227 to 230 (CPGG), D246, D266, and D284 each bind S-adenosyl-L-methionine. K313 serves as the catalytic Proton acceptor.

It belongs to the class I-like SAM-binding methyltransferase superfamily. RNA methyltransferase RlmE family. RlmM subfamily. As to quaternary structure, monomer.

Its subcellular location is the cytoplasm. It catalyses the reaction cytidine(2498) in 23S rRNA + S-adenosyl-L-methionine = 2'-O-methylcytidine(2498) in 23S rRNA + S-adenosyl-L-homocysteine + H(+). Its function is as follows. Catalyzes the 2'-O-methylation at nucleotide C2498 in 23S rRNA. This Haemophilus influenzae (strain ATCC 51907 / DSM 11121 / KW20 / Rd) protein is Ribosomal RNA large subunit methyltransferase M.